Consider the following 648-residue polypeptide: Bifunctional protein TilS/HprT (648 aa).

29-34 (SGGPDS) serves as a coordination point for ATP. Residue D627 participates in Mg(2+) binding.

This sequence in the N-terminal section; belongs to the tRNA(Ile)-lysidine synthase family. The protein in the C-terminal section; belongs to the purine/pyrimidine phosphoribosyltransferase family. The cofactor is Mg(2+).

It is found in the cytoplasm. It carries out the reaction IMP + diphosphate = hypoxanthine + 5-phospho-alpha-D-ribose 1-diphosphate. The enzyme catalyses GMP + diphosphate = guanine + 5-phospho-alpha-D-ribose 1-diphosphate. It catalyses the reaction cytidine(34) in tRNA(Ile2) + L-lysine + ATP = lysidine(34) in tRNA(Ile2) + AMP + diphosphate + H(+). Ligates lysine onto the cytidine present at position 34 of the AUA codon-specific tRNA(Ile) that contains the anticodon CAU, in an ATP-dependent manner. Cytidine is converted to lysidine, thus changing the amino acid specificity of the tRNA from methionine to isoleucine. The sequence is that of Bifunctional protein TilS/HprT (tilS/hprT) from Listeria monocytogenes serotype 4b (strain F2365).